The primary structure comprises 359 residues: (2E,6E)-farnesyl diphosphate synthase (359 aa).

The disordered stretch occupies residues 1 to 21 (MRGTDEKYGLPPQPDSDRMTR). Isopentenyl diphosphate contacts are provided by lysine 73, arginine 76, and histidine 105. Positions 112 and 116 each coordinate Mg(2+). The short motif at 112–116 (DDLMD) is the DDXXD motif element. Residue arginine 121 coordinates (2E)-geranyl diphosphate. An isopentenyl diphosphate-binding site is contributed by arginine 122. The (2E)-geranyl diphosphate site is built by lysine 201, threonine 202, and glutamine 239. The short motif at 242–246 (DDLLG) is the DDXXD motif element. 2 residues coordinate (2E)-geranyl diphosphate: lysine 256 and lysine 266.

Belongs to the FPP/GGPP synthase family. The cofactor is Mg(2+).

The protein resides in the cytoplasm. It catalyses the reaction isopentenyl diphosphate + (2E)-geranyl diphosphate = (2E,6E)-farnesyl diphosphate + diphosphate. Its pathway is isoprenoid biosynthesis; farnesyl diphosphate biosynthesis; farnesyl diphosphate from geranyl diphosphate and isopentenyl diphosphate. Catalyzes the condensation of isopentenyl pyrophosphate (IPP) with geranyl diphosphate (GPP) to yield (2E,6E)-farnesyl diphosphate (E,E-FPP). May be used for squalene and possibly sterol biosynthesis. The polypeptide is (2E,6E)-farnesyl diphosphate synthase (Mycobacterium bovis (strain ATCC BAA-935 / AF2122/97)).